The primary structure comprises 406 residues: NADH-ubiquinone oxidoreductase 49 kDa subunit (406 aa).

The protein belongs to the complex I 49 kDa subunit family. As to quaternary structure, complex I is composed of 45 different subunits. Component of the iron-sulfur (IP) fragment of the enzyme.

The protein resides in the mitochondrion inner membrane. The catalysed reaction is a ubiquinone + NADH + 5 H(+)(in) = a ubiquinol + NAD(+) + 4 H(+)(out). Core subunit of the mitochondrial membrane respiratory chain NADH dehydrogenase (Complex I) that is believed to belong to the minimal assembly required for catalysis. Complex I functions in the transfer of electrons from NADH to the respiratory chain. The immediate electron acceptor for the enzyme is believed to be ubiquinone. This is NADH-ubiquinone oxidoreductase 49 kDa subunit (nad7) from Dictyostelium citrinum (Slime mold).